We begin with the raw amino-acid sequence, 348 residues long: NADH-ubiquinone oxidoreductase chain 2 (348 aa).

The next 9 helical transmembrane spans lie at 1–21 (MSPY…TITA), 60–80 (FLTQ…NAWL), 96–116 (TLII…TWLP), 149–169 (NPTL…WGGL), 177–194 (ILAY…LILQ), 198–220 (TLTL…TFIL), 238–258 (ILTS…PLTG), 273–293 (DLAP…YFYL), and 328–348 (MAAS…LFNI).

Belongs to the complex I subunit 2 family.

It localises to the mitochondrion inner membrane. It carries out the reaction a ubiquinone + NADH + 5 H(+)(in) = a ubiquinol + NAD(+) + 4 H(+)(out). In terms of biological role, core subunit of the mitochondrial membrane respiratory chain NADH dehydrogenase (Complex I) that is believed to belong to the minimal assembly required for catalysis. Complex I functions in the transfer of electrons from NADH to the respiratory chain. The immediate electron acceptor for the enzyme is believed to be ubiquinone. The sequence is that of NADH-ubiquinone oxidoreductase chain 2 (MT-ND2) from Tetraodon nigroviridis (Spotted green pufferfish).